The sequence spans 435 residues: Chaperone SurA (435 aa).

Positions 1 to 24 (MRLRSFAFLGFMLLVAMAPSMASA) are cleaved as a signal peptide. PpiC domains follow at residues 173–274 (DTAY…KLID) and 286–385 (VTEN…ELED).

The protein resides in the periplasm. It catalyses the reaction [protein]-peptidylproline (omega=180) = [protein]-peptidylproline (omega=0). In terms of biological role, chaperone involved in the correct folding and assembly of outer membrane proteins. Recognizes specific patterns of aromatic residues and the orientation of their side chains, which are found more frequently in integral outer membrane proteins. May act in both early periplasmic and late outer membrane-associated steps of protein maturation. The sequence is that of Chaperone SurA from Chromohalobacter salexigens (strain ATCC BAA-138 / DSM 3043 / CIP 106854 / NCIMB 13768 / 1H11).